The chain runs to 509 residues: Maturase K (509 aa).

It belongs to the intron maturase 2 family. MatK subfamily.

It is found in the plastid. Its subcellular location is the chloroplast. Usually encoded in the trnK tRNA gene intron. Probably assists in splicing its own and other chloroplast group II introns. This is Maturase K from Trifolium semipilosum (Kenya clover).